Consider the following 494-residue polypeptide: NADPH:adrenodoxin oxidoreductase, mitochondrial (494 aa).

The transit peptide at 1-34 (MAPRCWRWWSWSAWPGVRPLPSRSTPTPGFCKKF) directs the protein to the mitochondrion. Residues Ala-51, Glu-72, Leu-80, and Val-116 each contribute to the FAD site. NADP(+) is bound by residues 187–190 (QGNV), 231–232 (RR), and Glu-243. Phosphoserine is present on Ser-313. Residues Trp-401 and 408 to 410 (GVI) each bind FAD. Gly-408 lines the NADP(+) pocket.

Belongs to the ferredoxin--NADP reductase type 1 family. Monomer. Interacts directly with FDX1. Requires FAD as cofactor.

Its subcellular location is the mitochondrion inner membrane. It catalyses the reaction 2 reduced [adrenodoxin] + NADP(+) + H(+) = 2 oxidized [adrenodoxin] + NADPH. The enzyme catalyses 2 reduced [2Fe-2S]-[ferredoxin] + NADP(+) + H(+) = 2 oxidized [2Fe-2S]-[ferredoxin] + NADPH. The protein operates within steroid metabolism; cholesterol metabolism. In terms of biological role, serves as the first electron transfer protein in all the mitochondrial P450 systems including cholesterol side chain cleavage in all steroidogenic tissues, steroid 11-beta hydroxylation in the adrenal cortex, 25-OH-vitamin D3-24 hydroxylation in the kidney, and sterol C-27 hydroxylation in the liver. Also acts as a ferredoxin--NADP(+) reductase essential for coenzyme Q biosynthesis: together with FDX2, transfers the electrons required for the hydroxylation reaction performed by COQ6. This is NADPH:adrenodoxin oxidoreductase, mitochondrial (Fdxr) from Rattus norvegicus (Rat).